Here is a 350-residue protein sequence, read N- to C-terminus: Nicotinate-nucleotide--dimethylbenzimidazole phosphoribosyltransferase (350 aa).

Glutamate 317 acts as the Proton acceptor in catalysis.

It belongs to the CobT family.

The enzyme catalyses 5,6-dimethylbenzimidazole + nicotinate beta-D-ribonucleotide = alpha-ribazole 5'-phosphate + nicotinate + H(+). It functions in the pathway nucleoside biosynthesis; alpha-ribazole biosynthesis; alpha-ribazole from 5,6-dimethylbenzimidazole: step 1/2. Catalyzes the synthesis of alpha-ribazole-5'-phosphate from nicotinate mononucleotide (NAMN) and 5,6-dimethylbenzimidazole (DMB). The protein is Nicotinate-nucleotide--dimethylbenzimidazole phosphoribosyltransferase of Shewanella sp. (strain MR-7).